The primary structure comprises 313 residues: Porphobilinogen deaminase (313 aa).

Position 242 is an S-(dipyrrolylmethanemethyl)cysteine (Cys-242).

It belongs to the HMBS family. As to quaternary structure, monomer. Requires dipyrromethane as cofactor.

It carries out the reaction 4 porphobilinogen + H2O = hydroxymethylbilane + 4 NH4(+). Its pathway is porphyrin-containing compound metabolism; protoporphyrin-IX biosynthesis; coproporphyrinogen-III from 5-aminolevulinate: step 2/4. Its function is as follows. Tetrapolymerization of the monopyrrole PBG into the hydroxymethylbilane pre-uroporphyrinogen in several discrete steps. The sequence is that of Porphobilinogen deaminase from Pseudomonas putida (strain ATCC 700007 / DSM 6899 / JCM 31910 / BCRC 17059 / LMG 24140 / F1).